A 110-amino-acid polypeptide reads, in one-letter code: V-type proton ATPase subunit G1 (110 aa).

Met-1 is subject to N-acetylmethionine. A disordered region spans residues 60-80 (KLEETSGDSGANVKRLEQETD).

It belongs to the V-ATPase G subunit family. As to quaternary structure, V-ATPase is a heteromultimeric enzyme composed of a peripheral catalytic V1 complex (components A to H) attached to an integral membrane V0 proton pore complex (components: a, c, c'', d and e).

The protein resides in the cell membrane. It is found in the vacuole membrane. Functionally, catalytic subunit of the peripheral V1 complex of vacuolar ATPase (V-ATPase). V-ATPase is responsible for acidifying a variety of intracellular compartments in eukaryotic cells. The polypeptide is V-type proton ATPase subunit G1 (VHA-G1) (Arabidopsis thaliana (Mouse-ear cress)).